Consider the following 541-residue polypeptide: Chlorophyllide a oxygenase, chloroplastic (541 aa).

Residues 114-151 (LAREFKSIGTLRKELAELQEELAKAHNQVHLSETRVSS) adopt a coiled-coil conformation. A compositionally biased stretch (polar residues) spans 178–192 (AECTSLAPSTSSASR). The segment at 178–208 (AECTSLAPSTSSASRVVNKKPPRRSLNVSGP) is disordered. The 101-residue stretch at 220-320 (WYPVAFSSDL…CFEQEGMVWI (101 aa)) folds into the Rieske domain. Residues cysteine 261, histidine 263, cysteine 280, and histidine 283 each contribute to the [2Fe-2S] cluster site. Residues aspartate 359, aspartate 363, histidine 366, and histidine 371 each contribute to the Fe cation site.

In terms of tissue distribution, expressed in leaves and germinating seedlings, but not in sheaths and roots.

It localises to the plastid. The protein localises to the chloroplast membrane. It is found in the chloroplast thylakoid membrane. It carries out the reaction chlorophyllide a + 2 NADPH + 2 O2 + 2 H(+) = chlorophyllide b + 2 NADP(+) + 3 H2O. Functionally, catalyzes a two-step oxygenase reaction involved in the synthesis of chlorophyll b. Acts specifically on the non-esterified chlorophyllide a and not on chlorophyll a. The sequence is that of Chlorophyllide a oxygenase, chloroplastic (CAO) from Oryza sativa subsp. japonica (Rice).